We begin with the raw amino-acid sequence, 321 residues long: Cytochrome c biogenesis protein CcsA (321 aa).

A run of 7 helical transmembrane segments spans residues Ile-17–Leu-37, Lys-43–Ser-63, Leu-71–Ile-91, Met-143–Ile-163, Val-225–Asn-245, Glu-258–His-273, and Ala-286–Leu-306.

The protein belongs to the CcmF/CycK/Ccl1/NrfE/CcsA family. May interact with Ccs1.

It is found in the plastid. Its subcellular location is the chloroplast thylakoid membrane. Required during biogenesis of c-type cytochromes (cytochrome c6 and cytochrome f) at the step of heme attachment. This is Cytochrome c biogenesis protein CcsA from Liriodendron tulipifera (Tuliptree).